A 267-amino-acid polypeptide reads, in one-letter code: 5'-nucleotidase SurE (267 aa).

The a divalent metal cation site is built by Asp-9, Asp-10, Ser-40, and Asn-97.

Belongs to the SurE nucleotidase family. A divalent metal cation is required as a cofactor.

It is found in the cytoplasm. It carries out the reaction a ribonucleoside 5'-phosphate + H2O = a ribonucleoside + phosphate. Functionally, nucleotidase that shows phosphatase activity on nucleoside 5'-monophosphates. This Helicobacter pylori (strain ATCC 700392 / 26695) (Campylobacter pylori) protein is 5'-nucleotidase SurE.